Reading from the N-terminus, the 446-residue chain is Glutamine synthetase (446 aa).

The 88-residue stretch at 15–102 (RDIRFVRLWF…MFCDITMPDG (88 aa)) folds into the GS beta-grasp domain. The region spanning 109–446 (SRHVLRRQLA…PYELKNYLSL (338 aa)) is the GS catalytic domain. Mg(2+) contacts are provided by Glu-132 and Glu-134. An ATP-binding site is contributed by Glu-184. The Mg(2+) site is built by Glu-189 and Glu-196. Gly-241 is an L-glutamate binding site. Residue His-245 coordinates Mg(2+). ATP contacts are provided by residues 247 to 249 (HMS) and Ser-249. The L-glutamate site is built by Arg-298, Glu-304, and Arg-316. 2 residues coordinate ATP: Arg-316 and Arg-321. Glu-336 lines the Mg(2+) pocket. Arg-338 contributes to the L-glutamate binding site. Lys-363 is covalently cross-linked (Isoglutamyl lysine isopeptide (Lys-Gln) (interchain with Q-Cter in protein Pup)).

The protein belongs to the glutamine synthetase family. Oligomer of 12 subunits arranged in the form of two hexagons. In its feedback-inhibited form, interacts with TnrA in order to block its DNA-binding activity. Requires Mg(2+) as cofactor.

It localises to the cytoplasm. It catalyses the reaction L-glutamate + NH4(+) + ATP = L-glutamine + ADP + phosphate + H(+). Inhibited by glutamine. Glutamine synthetase (GS) is an unusual multitasking protein that functions as an enzyme, a transcription coregulator, and a chaperone in ammonium assimilation and in the regulation of genes involved in nitrogen metabolism. It catalyzes the ATP-dependent biosynthesis of glutamine from glutamate and ammonia. Feedback-inhibited GlnA also interacts with and regulates the activity of the transcriptional regulator TnrA. During nitrogen limitation, TnrA is in its DNA-binding active state and turns on the transcription of genes required for nitrogen assimilation. Under conditions of nitrogen excess, feedback-inhibited GlnA forms a stable complex with TnrA, which inhibits its DNA-binding activity. In contrast, feedback-inhibited GlnA acts as a chaperone to stabilize the DNA-binding activity of GlnR, which represses the transcription of nitrogen assimilation genes. In Mycolicibacterium smegmatis (strain ATCC 700084 / mc(2)155) (Mycobacterium smegmatis), this protein is Glutamine synthetase.